Here is a 143-residue protein sequence, read N- to C-terminus: Large ribosomal subunit protein uL15 (143 aa).

Residues 1-56 (MELNSIKPAEGSKHAKRRVGRGIGSGLGKTAGRGHKGQKSRSGGYHKVGFEGGQMP) are disordered. Residues 21–31 (RGIGSGLGKTA) show a composition bias toward gly residues.

It belongs to the universal ribosomal protein uL15 family. As to quaternary structure, part of the 50S ribosomal subunit.

Its function is as follows. Binds to the 23S rRNA. This chain is Large ribosomal subunit protein uL15, found in Delftia acidovorans (strain DSM 14801 / SPH-1).